Consider the following 887-residue polypeptide: Pyruvate dehydrogenase E1 component (887 aa).

Homodimer. Part of the PDH complex, consisting of multiple copies of pyruvate dehydrogenase (E1), dihydrolipoamide acetyltransferase (E2) and lipoamide dehydrogenase (E3). The cofactor is thiamine diphosphate.

The enzyme catalyses N(6)-[(R)-lipoyl]-L-lysyl-[protein] + pyruvate + H(+) = N(6)-[(R)-S(8)-acetyldihydrolipoyl]-L-lysyl-[protein] + CO2. In terms of biological role, component of the pyruvate dehydrogenase (PDH) complex, that catalyzes the overall conversion of pyruvate to acetyl-CoA and CO(2). This Buchnera aphidicola subsp. Acyrthosiphon pisum (strain APS) (Acyrthosiphon pisum symbiotic bacterium) protein is Pyruvate dehydrogenase E1 component (aceE).